The primary structure comprises 154 residues: Histidine-containing phosphotransfer protein 1 (154 aa).

Position 1 is an N-acetylmethionine (Met1). An HPt domain is found at 38 to 143 (NPDFVSQVVT…FKLEQQIVAS (106 aa)). A Phosphohistidine modification is found at His79.

As to quaternary structure, interacts with the B-type response regulators ARR1, ARR2, ARR4 and ARR9. Binds to ETR1, AHK2, AHK3, AHK4, AHK5 and FBR12. Post-translationally, two-component system major event consists of a His-to-Asp phosphorelay between a sensor histidine kinase (HK) and a response regulator (RR). In plants, the His-to-Asp phosphorelay involves an additional intermediate named Histidine-containing phosphotransfer protein (HPt). This multistep phosphorelay consists of a His-Asp-His-Asp sequential transfer of a phosphate group between first a His and an Asp of the HK protein, followed by the transfer to a conserved His of the HPt protein and finally the transfer to an Asp in the receiver domain of the RR protein. In terms of tissue distribution, strongly expressed in roots.

Its subcellular location is the cytoplasm. It is found in the cytosol. The protein resides in the nucleus. Functions as a two-component phosphorelay mediators between cytokinin sensor histidine kinases and response regulator (B-type ARRs). Plays an important role in propagating cytokinin signal transduction through the multistep His-to-Asp phosphorelay. The sequence is that of Histidine-containing phosphotransfer protein 1 (AHP1) from Arabidopsis thaliana (Mouse-ear cress).